We begin with the raw amino-acid sequence, 643 residues long: E3 ubiquitin-protein ligase Praja-1 (643 aa).

Residues 1 to 363 form a disordered region; the sequence is MGQESSKPVW…SDDYYKYCDE (363 aa). 3 stretches are compositionally biased toward basic and acidic residues: residues 95–105, 145–158, and 173–183; these read DYSRYPPREYR, KFKDDKLYDPEKGA, and RDVREERDKLD. The span at 200–209 shows a compositional bias: low complexity; the sequence is QSSVASQSSS. Over residues 213-227 the composition is skewed to basic and acidic residues; sequence LATKGDSSERERREQ. Serine 265 is modified (phosphoserine). Phosphothreonine is present on threonine 277. Basic and acidic residues-rich tracts occupy residues 289 to 310 and 320 to 362; these read RWRDTANDNEGHSDGLARRGRG and KYPE…KYCD. Phosphoserine occurs at positions 365 and 367. The interval 380-454 is disordered; that stretch reads RSREQTLSSS…REPSLQEEQA (75 aa). Positions 410-439 are enriched in low complexity; it reads SASTGTSPGPGASASAGAGAGASAGSNGSN. An RING-type zinc finger spans residues 595–636; the sequence is CPICCSEYVKGEVATELPCHHYFHKPCVSIWLQKSGTCPVCR.

Binds ubiquitin-conjugating enzymes (E2s). In vitro, interacts with the ubiquitin-conjugating enzyme, UBE2D2. Post-translationally, substrate for E2-dependent ubiquitination. In terms of tissue distribution, expressed in various regions of the brain including the cerebellum, cerebral cortex, medulla, occipital pole, frontal lobe, temporal lobe and putamen. Highest levels in the cerebral cortex.

It carries out the reaction S-ubiquitinyl-[E2 ubiquitin-conjugating enzyme]-L-cysteine + [acceptor protein]-L-lysine = [E2 ubiquitin-conjugating enzyme]-L-cysteine + N(6)-ubiquitinyl-[acceptor protein]-L-lysine.. Functionally, has E2-dependent E3 ubiquitin-protein ligase activity. Ubiquitinates MAGED1 antigen leading to its subsequent degradation by proteasome. May be involved in protein sorting. The polypeptide is E3 ubiquitin-protein ligase Praja-1 (PJA1) (Homo sapiens (Human)).